A 406-amino-acid chain; its full sequence is Isocitrate dehydrogenase [NADP] (406 aa).

NADP(+) is bound by residues lysine 72, threonine 75, threonine 77, and arginine 82. 5 residues coordinate D-threo-isocitrate: serine 94, asparagine 96, arginine 100, glutamate 110, and arginine 132. Residues aspartate 250, aspartate 273, and aspartate 277 each contribute to the Mn(2+) site. Glycine 308, threonine 309, valine 310, histidine 313, and asparagine 326 together coordinate NADP(+).

This sequence belongs to the isocitrate and isopropylmalate dehydrogenases family. In terms of assembly, homodimer. The cofactor is Mg(2+). Requires Mn(2+) as cofactor.

It catalyses the reaction D-threo-isocitrate + NADP(+) = 2-oxoglutarate + CO2 + NADPH. Its function is as follows. Catalyzes the oxidative decarboxylation of isocitrate to 2-oxoglutarate and carbon dioxide with the concomitant reduction of NADP(+). This Sphingobium yanoikuyae (Sphingomonas yanoikuyae) protein is Isocitrate dehydrogenase [NADP] (icd).